The following is a 283-amino-acid chain: Pantothenate synthetase (283 aa).

Met-30–His-37 provides a ligand contact to ATP. Residue His-37 is the Proton donor of the active site. A (R)-pantoate-binding site is contributed by Gln-61. Residue Gln-61 coordinates beta-alanine. Gly-147 to Asp-150 contacts ATP. Residue Gln-153 participates in (R)-pantoate binding. ATP-binding positions include Val-176 and Met-184–Arg-187.

It belongs to the pantothenate synthetase family. As to quaternary structure, homodimer.

The protein resides in the cytoplasm. The enzyme catalyses (R)-pantoate + beta-alanine + ATP = (R)-pantothenate + AMP + diphosphate + H(+). The protein operates within cofactor biosynthesis; (R)-pantothenate biosynthesis; (R)-pantothenate from (R)-pantoate and beta-alanine: step 1/1. Functionally, catalyzes the condensation of pantoate with beta-alanine in an ATP-dependent reaction via a pantoyl-adenylate intermediate. In Thermoanaerobacter sp. (strain X514), this protein is Pantothenate synthetase.